A 318-amino-acid polypeptide reads, in one-letter code: Ribosome biogenesis protein RLP7 (318 aa).

Disordered stretches follow at residues 1–49 (MSQP…NRFV) and 101–121 (AGSK…DEED). Over residues 19–40 (ADRTRLEKQELAKKRKEQEEKQ) the composition is skewed to basic and acidic residues. Residues 110-121 (ELQDVDEEDEED) show a composition bias toward acidic residues.

Belongs to the universal ribosomal protein uL30 family.

Its subcellular location is the nucleus. The protein resides in the nucleolus. In terms of biological role, involved in the biogenesis of the 60S ribosomal subunit. May act as a specificity factor that binds precursor rRNAs and tethers the enzymes that carry out the early 5' to 3' exonucleolytic reactions that generate the mature rRNAs. This is Ribosome biogenesis protein RLP7 (RLP7) from Kluyveromyces lactis (strain ATCC 8585 / CBS 2359 / DSM 70799 / NBRC 1267 / NRRL Y-1140 / WM37) (Yeast).